Reading from the N-terminus, the 1383-residue chain is ATP-dependent RNA helicase TDRD9 (1383 aa).

The tract at residues 35 to 82 is disordered; the sequence is EAPREEVQRSEEVPNEDPTAQAQVPVKATAPARPASTSGRSLSQRSSE. Residues 36-46 show a composition bias toward basic and acidic residues; sequence APREEVQRSEE. Positions 70 to 80 are enriched in low complexity; the sequence is STSGRSLSQRS. One can recognise a Helicase ATP-binding domain in the interval 144-310; that stretch reads ISLIESNSVV…FAVPVQNKMN (167 aa). 157–164 is a binding site for ATP; that stretch reads GATGSGKS. Positions 256-259 match the DEAH box motif; sequence DEVH. The 168-residue stretch at 378-545 folds into the Helicase C-terminal domain; that stretch reads SGAQFVSERS…ILKVKLLDMG (168 aa). One can recognise a Tudor domain in the interval 945–1005; that stretch reads HPHPDLVCLA…REIPCQFLEL (61 aa).

Belongs to the DEAD box helicase family. DEAH subfamily. Interacts with piRNA-associated proteins PIWIL1 and PIWIL4. In terms of tissue distribution, predominantly expressed in reproductive organs. Detected in mitotic spermatogonia, meiotic spermatocytes (predominantly at the pachytene stage), haploid spermatids in the testis, and in growing oocytes in the ovary (at protein level).

It is found in the cytoplasm. The protein resides in the nucleus. The enzyme catalyses ATP + H2O = ADP + phosphate + H(+). In terms of biological role, ATP-binding RNA helicase which plays a central role during spermatogenesis by repressing transposable elements and preventing their mobilization, which is essential for the germline integrity. Acts via the piRNA metabolic process, which mediates the repression of transposable elements during meiosis by forming complexes composed of piRNAs and Piwi proteins and governs the methylation and subsequent repression of transposons. Acts downstream of piRNA biogenesis: exclusively required for transposon silencing in the nucleus, suggesting that it acts as a nuclear effector in the nucleus together with PIWIL4. The chain is ATP-dependent RNA helicase TDRD9 from Mus musculus (Mouse).